The primary structure comprises 24 residues: Conotoxin PIVF (24 aa).

3 disulfides stabilise this stretch: cysteine 2-cysteine 10, cysteine 3-cysteine 15, and cysteine 13-cysteine 19. Lysine 24 carries the lysine amide modification.

Belongs to the conotoxin A superfamily. Expressed by the venom duct.

The protein resides in the secreted. In terms of biological role, probable neurotoxin with ion channel inhibitor activity. In vivo, elicits dose-dependently excitatory activity upon injection into fish. Its action is slowly reversible. The chain is Conotoxin PIVF from Conus purpurascens (Purple cone).